The sequence spans 232 residues: Small ribosomal subunit protein uS3 (232 aa).

The region spanning 39–107 (VRRFLEQRLK…PVHVNIEEVR (69 aa)) is the KH type-2 domain.

It belongs to the universal ribosomal protein uS3 family. Part of the 30S ribosomal subunit. Forms a tight complex with proteins S10 and S14.

Functionally, binds the lower part of the 30S subunit head. Binds mRNA in the 70S ribosome, positioning it for translation. The chain is Small ribosomal subunit protein uS3 from Chromohalobacter salexigens (strain ATCC BAA-138 / DSM 3043 / CIP 106854 / NCIMB 13768 / 1H11).